The primary structure comprises 976 residues: 3-O-beta-L-arabinopyranosyl-alpha-L-arabinofuranosidase (976 aa).

A signal peptide spans 1-28 (MSHRNKALVAIVAGTALLISSGAAIGQA). Residue glutamate 190 is the Proton donor of the active site. The Nucleophile role is filled by glutamate 315. The CBM6 domain maps to 519–654 (LLVEEVENTV…DNTLDKFLLY (136 aa)).

Belongs to the glycosyl hydrolase 39 family.

It is found in the secreted. The enzyme catalyses Hydrolysis of beta-L-Arap-(1-&gt;3)-L-Araf disaccharides from non-reducing terminals in branches of type II arabinogalactan attached to proteins.. Hydrolase involved in the degradation of the gum arabic arabinogalactan protein (AGP) and larch AGP. Catalyzes the release of 3-O-beta-L-arabinopyranosyl-L-arabinose (beta-L-Arap-(1-&gt;3)-L-Ara) from gum arabic AGP and larch AGP. Also cleaves a small amount of beta-L-Arap-(1-&gt;3)-L-Ara from sugar beet arabinan, but wheat AGP cannot be used as a substrate. Can also release 3-O-alpha-D-galactopyranosyl-L-arabinose (alpha-D-Galp-(1-&gt;3)-L-Ara) from gum arabic AGP, with low efficiency. This chain is 3-O-beta-L-arabinopyranosyl-alpha-L-arabinofuranosidase, found in Bifidobacterium pseudocatenulatum.